Reading from the N-terminus, the 88-residue chain is Protein MATERNALLY EXPRESSED GENE 2 (88 aa).

The signal sequence occupies residues 1–27 (MEYRKRVDALVFFSLLLLGYFAAHAHG). A disulfide bond links cysteine 65 and cysteine 87.

It belongs to the MEG family. Expressed exclusively in endosperm.

The polypeptide is Protein MATERNALLY EXPRESSED GENE 2 (MEG2) (Zea mays (Maize)).